The primary structure comprises 112 residues: T cell receptor alpha variable 12-1 (112 aa).

An N-terminal signal peptide occupies residues 1-20 (MISLRVLLVILWLQLSWVWS). One can recognise an Ig-like domain in the interval 23–112 (KEVEQDPGPF…DSATYLCVVN (90 aa)). Residue N43 is glycosylated (N-linked (GlcNAc...) asparagine). C44 and C109 are disulfide-bonded.

Alpha-beta TR is a heterodimer composed of an alpha and beta chain; disulfide-linked. The alpha-beta TR is associated with the transmembrane signaling CD3 coreceptor proteins to form the TR-CD3 (TcR or TCR). The assembly of alpha-beta TR heterodimers with CD3 occurs in the endoplasmic reticulum where a single alpha-beta TR heterodimer associates with one CD3D-CD3E heterodimer, one CD3G-CD3E heterodimer and one CD247 homodimer forming a stable octameric structure. CD3D-CD3E and CD3G-CD3E heterodimers preferentially associate with TR alpha and TR beta chains, respectively. The association of the CD247 homodimer is the last step of TcR assembly in the endoplasmic reticulum and is required for transport to the cell surface.

Its subcellular location is the cell membrane. Functionally, v region of the variable domain of T cell receptor (TR) alpha chain that participates in the antigen recognition. Alpha-beta T cell receptors are antigen specific receptors which are essential to the immune response and are present on the cell surface of T lymphocytes. Recognize peptide-major histocompatibility (MH) (pMH) complexes that are displayed by antigen presenting cells (APC), a prerequisite for efficient T cell adaptive immunity against pathogens. Binding of alpha-beta TR to pMH complex initiates TR-CD3 clustering on the cell surface and intracellular activation of LCK that phosphorylates the ITAM motifs of CD3G, CD3D, CD3E and CD247 enabling the recruitment of ZAP70. In turn ZAP70 phosphorylates LAT, which recruits numerous signaling molecules to form the LAT signalosome. The LAT signalosome propagates signal branching to three major signaling pathways, the calcium, the mitogen-activated protein kinase (MAPK) kinase and the nuclear factor NF-kappa-B (NF-kB) pathways, leading to the mobilization of transcription factors that are critical for gene expression and essential for T cell growth and differentiation. The T cell repertoire is generated in the thymus, by V-(D)-J rearrangement. This repertoire is then shaped by intrathymic selection events to generate a peripheral T cell pool of self-MH restricted, non-autoaggressive T cells. Post-thymic interaction of alpha-beta TR with the pMH complexes shapes TR structural and functional avidity. The sequence is that of T cell receptor alpha variable 12-1 from Homo sapiens (Human).